Reading from the N-terminus, the 415-residue chain is Vascular endothelial growth factor C (415 aa).

A signal peptide spans 1-31 (MHLLCFLSLACSLLAAALIPSPREAPATVAA). Positions 32–107 (FESGLGFSEA…RTGDSVKFAA (76 aa)) are excised as a propeptide. 3 disulfides stabilise this stretch: Cys127–Cys169, Cys158–Cys205, and Cys162–Cys207. N-linked (GlcNAc...) asparagine glycosylation is found at Asn171, Asn201, and Asn236. Residues 224–415 (SLPATLPQCQ…PSYWKRPHLN (192 aa)) constitute a propeptide that is removed on maturation. Tandem repeats lie at residues 276–291 (CGPNKELDEDTCQCVC), 300–315 (CGPHKELDRDSCQCVC), 324–339 (CGANREFDENTCQCVC), and 343–358 (CPRNQPLNPGKCACEC). A 4 X 16 AA repeats of C-X(10)-C-X-C-X(1,3)-C region spans residues 276–358 (CGPNKELDED…LNPGKCACEC (83 aa)).

This sequence belongs to the PDGF/VEGF growth factor family. In terms of assembly, homodimer; non-covalent and antiparallel. Interacts with FLT4/VEGFR3; the interaction is required for FLT4/VEGFR3 homodimarization and activation. Post-translationally, undergoes a complex proteolytic maturation which generates a variety of processed secreted forms with increased activity toward VEGFR-3, but only the fully processed form could activate VEGFR-2. VEGF-C first form an antiparallel homodimer linked by disulfide bonds. Before secretion, a cleavage occurs between Arg-223 and Ser-224 producing a heterotetramer. The next extracellular step of the processing removes the N-terminal propeptide. Finally the mature VEGF-C is composed mostly of two VEGF homology domains (VHDs) bound by non-covalent interactions. As to expression, expressed in adult heart, brain, spleen, lung, liver, skeletal muscle, kidney, testis and intestine with higher levels in heart, brain and kidney. Isoform 4 levels are very low. Isoform 3 is mostly expressed in liver and has reduced expression level in other tissues. Isoform 2 is mostly expressed in brain and kidney, although a lower level expression in other tissues is also detectable.

It is found in the secreted. In terms of biological role, growth factor active in angiogenesis, and endothelial cell growth, stimulating their proliferation and migration and also has effects on the permeability of blood vessels. May function in angiogenesis of the venous and lymphatic vascular systems during embryogenesis, and also in the maintenance of differentiated lymphatic endothelium in adults. Binds and activates KDR/VEGFR2 and FLT4/VEGFR3 receptors. This Mus musculus (Mouse) protein is Vascular endothelial growth factor C (Vegfc).